We begin with the raw amino-acid sequence, 358 residues long: Putative zinc metalloprotease RC0203 (358 aa).

His18 provides a ligand contact to Zn(2+). Residue Glu19 is part of the active site. His22 is a binding site for Zn(2+). 4 consecutive transmembrane segments (helical) span residues Gly52–Tyr71, Phe97–Tyr119, Tyr285–Leu307, and Ile332–Asn351. The PDZ domain maps to Ala102–Glu186.

The protein belongs to the peptidase M50B family. Requires Zn(2+) as cofactor.

Its subcellular location is the cell inner membrane. This chain is Putative zinc metalloprotease RC0203, found in Rickettsia conorii (strain ATCC VR-613 / Malish 7).